The following is a 732-amino-acid chain: Conidiogenone synthase (732 aa).

The interval 1–311 (MADKITDEYA…SLCVPRYCKV (311 aa)) is terpene cyclase. Asp-97 contributes to the Mg(2+) binding site. Substrate contacts are provided by residues Asp-97, 169–172 (RIVD), Asn-213, 217–221 (SWDKE), and 307–308 (RY). Residues 97-101 (DALNQ) carry the DDXXD 1 motif. The short motif at 213–221 (NDLFSWDKE) is the NSE/DTE element. Residues 312–732 (DRNPYKDHLE…LRAMEETLQK (421 aa)) form a prenyltransferase region. Residues 348–370 (KQSELKDPSSSTYKSHFSPLEPN) are disordered. Isopentenyl diphosphate-binding residues include Lys-402, Arg-405, and His-434. Residues Asp-441 and Asp-445 each coordinate Mg(2+). The DDXXD 2 motif lies at 441–445 (DDIQD). Arg-450 contributes to the dimethylallyl diphosphate binding site. Arg-451 provides a ligand contact to isopentenyl diphosphate. Residues Lys-529, Thr-530, Gln-565, Asn-572, Lys-582, and Lys-592 each contribute to the dimethylallyl diphosphate site.

It in the N-terminal section; belongs to the terpene synthase family. The protein in the C-terminal section; belongs to the FPP/GGPP synthase family. In terms of assembly, hexamer. Requires Mg(2+) as cofactor.

It catalyses the reaction isopentenyl diphosphate + (2E,6E)-farnesyl diphosphate = (2E,6E,10E)-geranylgeranyl diphosphate + diphosphate. It participates in secondary metabolite biosynthesis; terpenoid biosynthesis. Its function is as follows. Bifunctional terpene synthase; part of the gene cluster that mediates the biosynthesis of conidiogenone, a diterpene known to induce the conidiation. The bifunctional terpene synthase PchDS converts isopentenyl diphosphate (IPP) and dimethylallyl diphosphate (DMAPP) into deoxyconidiogenol. The C-terminal prenyltransferase (PT) domain of PchDS catalyzes formation of GGPP, whereas the N-terminal terpene cyclase (TC) domain catalyzes the cyclization of GGPP into deoxyconidiogenol. The cytochrome P450 monooxygenase PchP450 then catalyzes two rounds of oxidation to furnish conidiogenone. The sequence is that of Conidiogenone synthase from Penicillium rubens (strain ATCC 28089 / DSM 1075 / NRRL 1951 / Wisconsin 54-1255) (Penicillium chrysogenum).